The following is a 190-amino-acid chain: Surfactant protein C (190 aa).

A propeptide spanning residues 1 to 23 (MDVGSKEVLIENPPDYSAAPQGR) is cleaved from the precursor. Residue Cys-28 is the site of S-palmitoyl cysteine attachment. The propeptide occupies 59 to 190 (HMSQKHTEMV…LCGEVPLYYI (132 aa)). Residues 94-190 (FSIGSTGIVV…LCGEVPLYYI (97 aa)) form the BRICHOS domain. Cys-121 and Cys-182 are oxidised to a cystine.

Its subcellular location is the secreted. The protein resides in the extracellular space. The protein localises to the surface film. Functionally, pulmonary surfactant associated proteins promote alveolar stability by lowering the surface tension at the air-liquid interface in the peripheral air spaces. The protein is Surfactant protein C (SFTPC) of Neovison vison (American mink).